The following is a 258-amino-acid chain: Ribosomal RNA small subunit methyltransferase A (258 aa).

S-adenosyl-L-methionine is bound by residues His-13, Leu-15, Gly-40, Glu-61, Asp-85, and Asn-106.

Belongs to the class I-like SAM-binding methyltransferase superfamily. rRNA adenine N(6)-methyltransferase family. RsmA subfamily.

The protein localises to the cytoplasm. The catalysed reaction is adenosine(1518)/adenosine(1519) in 16S rRNA + 4 S-adenosyl-L-methionine = N(6)-dimethyladenosine(1518)/N(6)-dimethyladenosine(1519) in 16S rRNA + 4 S-adenosyl-L-homocysteine + 4 H(+). Specifically dimethylates two adjacent adenosines (A1518 and A1519) in the loop of a conserved hairpin near the 3'-end of 16S rRNA in the 30S particle. May play a critical role in biogenesis of 30S subunits. This chain is Ribosomal RNA small subunit methyltransferase A, found in Porphyromonas gingivalis (strain ATCC 33277 / DSM 20709 / CIP 103683 / JCM 12257 / NCTC 11834 / 2561).